A 575-amino-acid polypeptide reads, in one-letter code: Cytochrome P450 monooxygenase opaB (575 aa).

The N-linked (GlcNAc...) asparagine glycan is linked to asparagine 6. A helical membrane pass occupies residues 37–57; it reads FILAAILASIILLIIRNSMLS. N-linked (GlcNAc...) asparagine glycans are attached at residues asparagine 83 and asparagine 242. Heme is bound at residue cysteine 521.

It belongs to the cytochrome P450 family. Heme serves as cofactor.

The protein localises to the membrane. It participates in secondary metabolite biosynthesis. Its function is as follows. Cytochrome P450 monooxygenase; part of the gene cluster that mediates the biosynthesis of oxepinamides, derivatives of anthranilyl-containing tripeptides that share an oxepin ring and a fused pyrimidinone moiety. The nonribosomal peptide synthetase (NRPS) opaA assembles the quinazolinone core with D-Phe incorporation. The first adenylation domain (A1) of opaA loads and activates anthranilic acid whereas the second A domain (A2) is for activating of L-Phe, which is then converted to D-form by the E domain. The third A domain (A3) is responsible for L-Ile activation and the terminal condensation domain C3 for cyclization and releasing the NRPS product protuboxepin K. The cytochrome P450 monooxygenase opaB then catalyzes alone the oxepin ring formation to convert protuboxepin K into protuboxepin A. The flavoenzyme opaC installs subsequently one hydroxyl group at the oxepin ring, accompanied by double bond migration, to form 15-epi-oxepinamide E. The epimerase opaE changes the D-Phe residue back to L-form, leading to oxepinamide E, which is further methylated at the hydroxyl group at C-12 by the O-methyltransferase OpaF to yield oxepinamide F. The chain is Cytochrome P450 monooxygenase opaB from Aspergillus ustus.